We begin with the raw amino-acid sequence, 533 residues long: Pre-mRNA-splicing factor cwf24 (533 aa).

A compositionally biased stretch (polar residues) spans 1-17 (MEQKNLNINQASGSKIN). Residues 1–69 (MEQKNLNINQ…MRDNIPIVSG (69 aa)) are disordered. Over residues 27–43 (SRRRHRPRQGLKRKKGF) the composition is skewed to basic residues. The segment at 184–212 (DYQPDVCKDYKLTGYCGYGDTCKFLHMRE) adopts a C3H1-type zinc-finger fold. Residues 254 to 292 (CLICKKDYRSPIATTCGHHFCEQCAITRYRKTPTCIQCG) form an RING-type zinc finger. Positions 379 to 524 (YFIREITESN…SAFYMVCPLS (146 aa)) constitute an N-acetyltransferase domain.

It belongs to the CWC24 family. In terms of assembly, belongs to the 40S cdc5-associated complex (or cwf complex), a spliceosome sub-complex reminiscent of a late-stage spliceosome composed of the U2, U5 and U6 snRNAs and at least brr2, cdc5, cwf2/prp3, cwf3/syf1, cwf4/syf3, cwf5/ecm2, spp42/cwf6, cwf7/spf27, cwf8, cwf9, cwf10, cwf11, cwf12, prp45/cwf13, cwf14, cwf15, cwf16, cwf17, cwf18, cwf19, cwf20, cwf21, cwf22, cwf23, cwf24, cwf25, cwf26, cyp7/cwf27, cwf28, cwf29/ist3, lea1, msl1, prp5/cwf1, prp10, prp12/sap130, prp17, prp22, sap61, sap62, sap114, sap145, slu7, smb1, smd1, smd3, smf1, smg1 and syf2.

It is found in the nucleus. Involved in mRNA splicing. This Schizosaccharomyces pombe (strain 972 / ATCC 24843) (Fission yeast) protein is Pre-mRNA-splicing factor cwf24 (cwf24).